The sequence spans 946 residues: Probable outer membrane protein pmp18 (946 aa).

An N-terminal signal peptide occupies residues 1–16 (MQNNRSLSKSSFFVGA). Positions 668 to 946 (QGQIAPTASG…YLHAGTTFKF (279 aa)) constitute an Autotransporter domain.

Belongs to the PMP outer membrane protein family.

It is found in the secreted. It localises to the cell wall. The protein localises to the cell outer membrane. The polypeptide is Probable outer membrane protein pmp18 (pmp18) (Chlamydia pneumoniae (Chlamydophila pneumoniae)).